The primary structure comprises 174 residues: UPF0316 protein LMHCC_0787 (174 aa).

Helical transmembrane passes span 4–24, 36–56, and 62–82; these read GIFI…IYTV, LAAL…SLVL, and IANV…GMKI.

It belongs to the UPF0316 family.

The protein resides in the cell membrane. The chain is UPF0316 protein LMHCC_0787 from Listeria monocytogenes serotype 4a (strain HCC23).